The following is a 104-amino-acid chain: Histone-like protein p6 (104 aa).

The DNA-binding element occupies 1-19; the sequence is MAKMMQREITKTTVNVAKM. Positions 85–104 are disordered; that stretch reads VEKDEDQEEQTEAPEEQVAE. Residues 88-104 show a composition bias toward acidic residues; the sequence is DEDQEEQTEAPEEQVAE.

It belongs to the phi29likevirus histone-like protein p6 family. Homodimer. Homomultimer. Binds to double-stranded DNA giving rise to multimeric nucleoprotein complexes. Binding specificity for the viral DNA is based on supercoiling, the viral genome having a negative superhelicity lower than that of plasmid DNA. Interacts with the DNA replication protein p17; this interaction optimizes the binding of protein p6 at the viral DNA ends, thus favoring the initiation of replication. Interacts with the late genes activator p4 (via C-terminus).

Functionally, histone-like nucleoprotein that binds to the viral dsDNA and responsible for wrapping and compacting the viral DNA about 4-fold. Forms a nucleoprotein complex in which the DNA adopts a right-handed toroidal conformation winding around a protein core. Binds ito most, if not all, the viral genome, although with different affinity, the highest one corresponding to the genome ends. The formation of the nucleoprotein complex at the genome ends, activates the initiation of viral DNA replication. The binding of p6 would recruit the complex formed by the TP and the DNA polymerase to the origin. Protein p6 also represses early transcription from promoter C2, and, together with protein p4, represses transcription from promoters A2b and A2c and activates late transcription from promoter A3. Protein p6 is therefore involved in the early to late transcription switch. The formation of the nucleoprotein complex at the right end of the phage genome where the early promoter C2 is located affects local topology, which may contribute to the promoter repression. The sequence is that of Histone-like protein p6 (6) from Bacillus subtilis (Bacteriophage phi-29).